A 138-amino-acid chain; its full sequence is MFAFKRSSCYFQVSNKIVKNGQIRGYISVADRVHRVTMFKMPKAEDQQRFLEQCRKMAADNQRNGSPYILSMVAGPAEDGPRTEGYTFVNKTEFASMEDMKYYETECPAHGEVKKVLGEITIDGMMTVFFKPQATGGA.

In terms of domain architecture, Stress-response A/B barrel spans 33-130; sequence VHRVTMFKMP…TIDGMMTVFF (98 aa).

Its pathway is secondary metabolite biosynthesis. Part of the gene cluster that mediates the biosynthesis of the lipopeptide fusaristatin A. Fusaristatin A consists of a polyketide chain linked to three amino acid residues glutamine (Gln), dehydroalanine (dehydro-Ala), and beta-aminoisobutyric acid. The biosynthesis starts with formation of a linear polyketide chain by the highly reducing polyketide synthase PKS6. The gene cluster does not contain an acyl-CoA ligase or an acyl-transferase, and it is therefore predicted that the polyketide is transferred directly to the nonribosomal peptide synthetase NRPS7. Modules 1-3 from NRPS7 incorporate dehydro-Ala, Gln, and beta-aminoisobutyric acid in the compound, which is released by cyclization. The beta-aminoisobutyric acid units are most likely not freely available to the NRPS, but can be synthesized from thymine, which requires a dehydrogenase, a monooxygenase, and an aminotransferase. The fusaristatin A cluster contains a cytochrome P450 monooxygenase (FGSG_08207) and an aminotransferase (FGSG_17085), which theoretically can perform two of the enzymatic steps. The enzymes may however also be involved in biosynthesis of dehydroalanine or modification of the polyketide. The dehydro-Ala residue can be a result of cyclization, where serine is dehydrated. The last gene of the cluster encodes a protein with an A/B barrel domain found in variable enzymes, which hampers functional prediction. The polypeptide is Fusaristatin A biosynthesis cluster protein FGSG_08206 (Gibberella zeae (strain ATCC MYA-4620 / CBS 123657 / FGSC 9075 / NRRL 31084 / PH-1) (Wheat head blight fungus)).